A 740-amino-acid polypeptide reads, in one-letter code: Ion-translocating oxidoreductase complex subunit C (740 aa).

2 consecutive 4Fe-4S ferredoxin-type domains span residues 369-397 (GEPQEEQSCIRCSACADACPADLLPQQLY) and 407-436 (KATTHNIADCIECGACAWVCPSNIPLVQYF). 8 residues coordinate [4Fe-4S] cluster: Cys-377, Cys-380, Cys-383, Cys-387, Cys-416, Cys-419, Cys-422, and Cys-426. The interval 602 to 717 (KLEQQQANAE…PEEQVDPRKA (116 aa)) is disordered. 2 stretches are compositionally biased toward low complexity: residues 605–615 (QQQANAEPEQQ) and 637–647 (QQQANAEPEQQ).

It belongs to the 4Fe4S bacterial-type ferredoxin family. RnfC subfamily. As to quaternary structure, the complex is composed of six subunits: RsxA, RsxB, RsxC, RsxD, RsxE and RsxG. [4Fe-4S] cluster is required as a cofactor.

It localises to the cell inner membrane. Its function is as follows. Part of a membrane-bound complex that couples electron transfer with translocation of ions across the membrane. Required to maintain the reduced state of SoxR. The chain is Ion-translocating oxidoreductase complex subunit C from Escherichia coli (strain ATCC 8739 / DSM 1576 / NBRC 3972 / NCIMB 8545 / WDCM 00012 / Crooks).